We begin with the raw amino-acid sequence, 405 residues long: Tyrosine--tRNA ligase (405 aa).

Y35 is a binding site for L-tyrosine. A 'HIGH' region motif is present at residues 40–49; that stretch reads TTSSSLHIGH. L-tyrosine-binding residues include Y166 and Q170. The 'KMSKS' region motif lies at 226-230; that stretch reads KMGKS. K229 serves as a coordination point for ATP. An S4 RNA-binding domain is found at 340 to 404; it reads ILLIDLMLDS…VGKKKFLRIV (65 aa).

This sequence belongs to the class-I aminoacyl-tRNA synthetase family. TyrS type 1 subfamily. Homodimer.

The protein localises to the cytoplasm. The enzyme catalyses tRNA(Tyr) + L-tyrosine + ATP = L-tyrosyl-tRNA(Tyr) + AMP + diphosphate + H(+). In terms of biological role, catalyzes the attachment of tyrosine to tRNA(Tyr) in a two-step reaction: tyrosine is first activated by ATP to form Tyr-AMP and then transferred to the acceptor end of tRNA(Tyr). The polypeptide is Tyrosine--tRNA ligase (Borrelia garinii subsp. bavariensis (strain ATCC BAA-2496 / DSM 23469 / PBi) (Borreliella bavariensis)).